We begin with the raw amino-acid sequence, 279 residues long: Digeranylgeranylglyceryl phosphate synthase (279 aa).

A run of 9 helical transmembrane segments spans residues 16–36, 40–60, 77–99, 104–121, 124–144, 146–166, 192–212, 220–240, and 259–279; these read LIAG…LPPI, LLIF…NDYF, GALS…ILIA, FEAF…YLYA, LKPQ…ITPI, GAIA…AFLV, IVWG…ATII, AGIG…LWAA, and LKIA…TKGV.

It belongs to the UbiA prenyltransferase family. DGGGP synthase subfamily. Mg(2+) serves as cofactor.

The protein localises to the cell membrane. The catalysed reaction is sn-3-O-(geranylgeranyl)glycerol 1-phosphate + (2E,6E,10E)-geranylgeranyl diphosphate = 2,3-bis-O-(geranylgeranyl)-sn-glycerol 1-phosphate + diphosphate. Its pathway is membrane lipid metabolism; glycerophospholipid metabolism. Its function is as follows. Prenyltransferase that catalyzes the transfer of the geranylgeranyl moiety of geranylgeranyl diphosphate (GGPP) to the C2 hydroxyl of (S)-3-O-geranylgeranylglyceryl phosphate (GGGP). This reaction is the second ether-bond-formation step in the biosynthesis of archaeal membrane lipids. The sequence is that of Digeranylgeranylglyceryl phosphate synthase from Thermococcus sibiricus (strain DSM 12597 / MM 739).